The sequence spans 513 residues: Putative BTB/POZ domain-containing protein L55 (513 aa).

Positions 11-83 constitute a BTB domain; it reads SPIKIILQDI…FHGYKMEISD (73 aa).

It belongs to the mimivirus BTB/WD family.

The protein is Putative BTB/POZ domain-containing protein L55 of Acanthamoeba polyphaga (Amoeba).